A 388-amino-acid polypeptide reads, in one-letter code: 4-hydroxy-tetrahydrodipicolinate synthase 1, chloroplastic (388 aa).

Residues 1–51 (MPYLQPPRPHPHPHPTSRLSRASPPSPFPFFPAGTSRSGRLQPVPVSGHSA) form a disordered region. A chloroplast-targeting transit peptide spans 1–62 (MPYLQPPRPH…RVSKGKFAVA (62 aa)). Pyruvate is bound at residue threonine 131. Tyrosine 217 functions as the Proton donor/acceptor in the catalytic mechanism. Catalysis depends on lysine 245, which acts as the Schiff-base intermediate with substrate. Position 284 (isoleucine 284) interacts with pyruvate.

Belongs to the DapA family. In terms of assembly, tetramer of modified subunits derived from two genes in different combinations.

Its subcellular location is the plastid. The protein localises to the chloroplast. The catalysed reaction is L-aspartate 4-semialdehyde + pyruvate = (2S,4S)-4-hydroxy-2,3,4,5-tetrahydrodipicolinate + H2O + H(+). The protein operates within amino-acid biosynthesis; L-lysine biosynthesis via DAP pathway; (S)-tetrahydrodipicolinate from L-aspartate: step 3/4. Sensitive to lysine inhibition. This inhibition increase in an allosteric manner with increasing concentration of the inhibitor. Functionally, catalyzes the condensation of (S)-aspartate-beta-semialdehyde [(S)-ASA] and pyruvate to 4-hydroxy-tetrahydrodipicolinate (HTPA). This is 4-hydroxy-tetrahydrodipicolinate synthase 1, chloroplastic from Triticum aestivum (Wheat).